We begin with the raw amino-acid sequence, 202 residues long: NADH-quinone oxidoreductase subunit C (202 aa).

Belongs to the complex I 30 kDa subunit family. In terms of assembly, NDH-1 is composed of 14 different subunits. Subunits NuoB, C, D, E, F, and G constitute the peripheral sector of the complex.

It is found in the cell inner membrane. It carries out the reaction a quinone + NADH + 5 H(+)(in) = a quinol + NAD(+) + 4 H(+)(out). Functionally, NDH-1 shuttles electrons from NADH, via FMN and iron-sulfur (Fe-S) centers, to quinones in the respiratory chain. The immediate electron acceptor for the enzyme in this species is believed to be ubiquinone. Couples the redox reaction to proton translocation (for every two electrons transferred, four hydrogen ions are translocated across the cytoplasmic membrane), and thus conserves the redox energy in a proton gradient. The chain is NADH-quinone oxidoreductase subunit C from Bartonella henselae (strain ATCC 49882 / DSM 28221 / CCUG 30454 / Houston 1) (Rochalimaea henselae).